The chain runs to 431 residues: 3'3'-cGAMP-specific phosphodiesterase 1 (431 aa).

Residues 39 to 155 (DINHGHRVGY…IFLADRVDYL (117 aa)) form the HD domain. In terms of domain architecture, HD-GYP spans 231 to 427 (GVEEIMSIAM…YYQLSIAESP (197 aa)). Positions 288 and 289 each coordinate a divalent metal cation. K292 serves as the catalytic Proton donor. A divalent metal cation contacts are provided by H317, H341, H342, and D370.

Monomer. It depends on Ca(2+) as a cofactor. Mg(2+) serves as cofactor.

It carries out the reaction 3',3'-cGAMP + H2O = 5'-pApG-3' + H(+). The catalysed reaction is 5'-pApG-3' + H2O = 5'-ApG-3' + phosphate. Its function is as follows. Phosphodiesterase (PDE) that catalyzes the hydrolysis of 3'3'-cyclic GMP-AMP (3'3'-cGAMP), leading to linear 5'-pApG. Also displays 5'-nucleotidase activity, further hydrolyzing 5'-pApG to 5'-ApG. Counteracts the function of the 3'3'-cGAMP synthase DncV, and is involved in the modulation of intracellular 3'3'-cGAMP levels. Enhances bacterial chemotaxis and inhibits intestinal colonization in vivo. Thus exerts a crucial role in regulating bacterial infectivity through catalyzing 3'3'-cGAMP degradation. Is specific for 3'3'-cGAMP since it cannot degrade other cGAMP linkage isomers (3'2'-, 2'3'-, and 2'2'-cGAMPs). Is also able to hydrolyze c-di-GMP but not c-di-AMP. The chain is 3'3'-cGAMP-specific phosphodiesterase 1 from Vibrio cholerae serotype O1 (strain ATCC 39315 / El Tor Inaba N16961).